Reading from the N-terminus, the 354-residue chain is MSKKKPLSQGQLRRMRANHEKRLNRDSGDKNTPELQDSSLGPEQSGTVISRFGQHADIETEDGHIVRCNIRRTITSLVTGDKVIVRLAIESQANSGIAGIVEAVHPRHSSLSRPDLYDGVKIIASNIDQILIVSSVLPSFTTQIIDRYLVAAEDTDIPPIIILNKIDLLTPEEAPAIEEALKRYQDIGYPVYKVSSKLGEGLETIKALLKDKVSVFAGQSGVGKSSLVNALLPEAELLVGDVSDNSGLGQHTTTTAKLLHLPSGGDLIDSPGVREFALWHLPAQRVGWCFIEFRDFLGGCKFRDCKHGDDPGCALKAAVDAGKISEDRFNNYHRIIASLDEQRHARQFRAQSDE.

Residues 1 to 46 (MSKKKPLSQGQLRRMRANHEKRLNRDSGDKNTPELQDSSLGPEQSG) form a disordered region. A compositionally biased stretch (basic and acidic residues) spans 17–32 (ANHEKRLNRDSGDKNT). Residues 33–46 (PELQDSSLGPEQSG) show a composition bias toward polar residues. In terms of domain architecture, CP-type G spans 108-276 (HSSLSRPDLY…LIDSPGVREF (169 aa)). Residues 164–167 (NKID) and 218–226 (GQSGVGKSS) contribute to the GTP site. Zn(2+)-binding residues include C300, C305, H307, and C313.

It belongs to the TRAFAC class YlqF/YawG GTPase family. RsgA subfamily. Monomer. Associates with 30S ribosomal subunit, binds 16S rRNA. It depends on Zn(2+) as a cofactor.

The protein resides in the cytoplasm. Functionally, one of several proteins that assist in the late maturation steps of the functional core of the 30S ribosomal subunit. Helps release RbfA from mature subunits. May play a role in the assembly of ribosomal proteins into the subunit. Circularly permuted GTPase that catalyzes slow GTP hydrolysis, GTPase activity is stimulated by the 30S ribosomal subunit. The polypeptide is Small ribosomal subunit biogenesis GTPase RsgA (Shewanella oneidensis (strain ATCC 700550 / JCM 31522 / CIP 106686 / LMG 19005 / NCIMB 14063 / MR-1)).